Reading from the N-terminus, the 496-residue chain is MAFLSLPILTALGAVVYVLFQLVYNLYFHPLRDYPGPLLWRASSLPWKLTLLRGTMHHDLMRHHQTYGDTVRIKPDEISYANGQAWRDIHAHVPGRPEFLKDPVRLPLAPNGVMSILVSDTRNHARFRSLFGHAFSDKGLRAQEPTIARYADLLVEVLREVADTGKSVEMVRYFNMAIFDSIGALSFGESFDSLRNRELHPWVDTIHKNLKSVAISHVLRSMGVEFLAPYLMPAELRGKRQENYTYAIEKLKKRMQKTGDQGDFWDRVIVKSADGNQSGDGMSYGEMINNAAVMVVAGSETTSSALCGCTYLLCKFDKMDKAVAEVRGAFAAADQIDLVSVSRLPYLTAVIDETLRMYPSVPGQPPRVVPEGGAIVCGRFVPAETRVGVSHLGAYYAPYNFSHADKFIPERHLAGAKLEEPFRHDNYAAYQPWSVGVRNCIGRNLAYAEVRLTLAKLLWHFDISLDEERTGNFLDQKIWSIWAKRELYLEIRTREF.

Residues 3-23 (FLSLPILTALGAVVYVLFQLV) form a helical membrane-spanning segment. Residue cysteine 440 participates in heme binding.

Belongs to the cytochrome P450 family. Heme is required as a cofactor.

It is found in the membrane. It catalyses the reaction versicolorin B + NADPH + O2 + H(+) = versicolorin A + NADP(+) + 2 H2O. It participates in mycotoxin biosynthesis; sterigmatocystin biosynthesis. Cytochrome P450 monooxygenase; part of the gene cluster that mediates the biosynthesis of sterigmatocystin (ST), a polyketide-derived furanocoumarin which is part of the most toxic and carcinogenic compounds among the known mycotoxins. The first step in the biosynthesis of sterigmatocystin is the production of hexanoate by the fatty acid synthase (FAS) units stcJ and stcK. The polyketide backbone is assembled by the non-reducing polyketide synthase stcA by condensation of the starter hexanoyl-CoA and 7 malonyl-CoA extender units followed by cyclization and release of norsolorinic acid. Norsolorinic acid is the first stable intermediate in the biosynthesis of sterigmatocystin and is converted into averantin (AVN) by the ketoreductase stcE which reduces the hexanoate ketone to an alcohol. Averantin is then oxidized into 5'-hydroxyaverantin (HAVN) by the cytochrome P450 monooxygenase stcF. 5'-hydroxyaverantin is further converted to 5'-oxyaverantin (OAVN) by the 5'-hydroxyaverantin dehydrogenase stcG. The next step is the conversion of OAVN into averufin (AVF) which is catalyzed by a yet to be identified enzyme. The cytochrome P450 monooxygenase stcB and the flavin-binding monooxygenase stcW are both required for the conversion of averufin to 1-hydroxyversicolorone. The esterase stcI probably catalyzes the formation of versiconal hemiacetal acetate from 1-hydroxyversicolorone. The oxydoreductase stcN then probably catalyzes the biosynthetic step from versiconal to versicolorin B (VERB). The next step is performed by the versicolorin B desaturase stcL to produce versicolorin A (VERA). The ketoreductase stcU and the cytochrome P450 monooxygenase stcS are involved in the conversion of versicolorin A to demethylsterigmatocystin. The Baeyer-Villiger oxidas stcQ and the reductase stcR might be involved in the biosynthetic step from versicolorin A to demethylsterigmatocystin. The final step in the biosynthesis of sterigmatocystin is the methylation of demethylsterigmatocystin catalyzed by the methyltransferase stcP. This Emericella nidulans (strain FGSC A4 / ATCC 38163 / CBS 112.46 / NRRL 194 / M139) (Aspergillus nidulans) protein is Versicolorin B desaturase stcL.